Consider the following 622-residue polypeptide: Low affinity potassium transport system protein Kup (622 aa).

12 helical membrane-spanning segments follow: residues 9–29, 49–69, 103–123, 137–157, 165–185, 213–233, 247–267, 276–296, 337–357, 363–383, 396–416, and 419–439; these read LPAI…TSPL, VFGF…IKYL, VIMG…TPAI, PQLD…LFMI, VGKL…VLGL, VSFI…ALYA, WFTV…ALLL, PFFL…AALA, IYIP…IVSF, LAAA…ILST, FVAL…SANL, and LLSG…IMTT.

The protein belongs to the HAK/KUP transporter (TC 2.A.72) family.

It is found in the cell inner membrane. It catalyses the reaction K(+)(in) + H(+)(in) = K(+)(out) + H(+)(out). Responsible for the low-affinity transport of potassium into the cell. Likely operates as a K(+):H(+) symporter. In Salmonella paratyphi B (strain ATCC BAA-1250 / SPB7), this protein is Low affinity potassium transport system protein Kup.